We begin with the raw amino-acid sequence, 347 residues long: MNPMTSTILLMTIMSGTSIVLMSSHWFMTWLGFEMNMMAIIPILMKNYNPRSMEAATKYFLTQATASMILVLAIIINLMHSGQWTITITENITASTLITIALVMKLGLAPFHFWVPEVTQGVSLSSGLILLTWQKIAPLSLLYQIYPSINTNLLLTMSLLSIMIGGWGGLNQTQLRKIMAYSSIAHMGWMIVIMIYNPNLSLLNLFIYIMMTSSMFMLLIANSATSTSSLSQSWNINPTITTMMMATLLSLGGLPPLTGFAPKWMIIQELTKNNSVILPTLMAILALLNLFFYMRLTYSTALTMFPTMNNMKLMWQFQPTSMTPMMTMLISISTLALPLTPLFISLS.

11 helical membrane-spanning segments follow: residues 3–23 (PMTSTILLMTIMSGTSIVLMS), 25–45 (HWFMTWLGFEMNMMAIIPILM), 59–79 (YFLTQATASMILVLAIIINLM), 96–116 (TLITIALVMKLGLAPFHFWVP), 122–142 (VSLSSGLILLTWQKIAPLSLL), 149–169 (INTNLLLTMSLLSIMIGGWGG), 178–198 (IMAYSSIAHMGWMIVIMIYNP), 200–220 (LSLLNLFIYIMMTSSMFMLLI), 240–260 (ITTMMMATLLSLGGLPPLTGF), 274–294 (NSVILPTLMAILALLNLFFYM), and 326–346 (MTMLISISTLALPLTPLFISL).

Belongs to the complex I subunit 2 family. Core subunit of respiratory chain NADH dehydrogenase (Complex I) which is composed of 45 different subunits. Interacts with TMEM242.

It localises to the mitochondrion inner membrane. It carries out the reaction a ubiquinone + NADH + 5 H(+)(in) = a ubiquinol + NAD(+) + 4 H(+)(out). Functionally, core subunit of the mitochondrial membrane respiratory chain NADH dehydrogenase (Complex I) which catalyzes electron transfer from NADH through the respiratory chain, using ubiquinone as an electron acceptor. Essential for the catalytic activity and assembly of complex I. The protein is NADH-ubiquinone oxidoreductase chain 2 of Sylvisorex granti (Grant's forest shrew).